The sequence spans 290 residues: Protease HtpX homolog (290 aa).

2 helical membrane-spanning segments follow: residues 4 to 24 (IFLF…VLSL) and 39 to 59 (PMLL…SLLI). His-144 is a binding site for Zn(2+). Glu-145 is an active-site residue. Zn(2+) is bound at residue His-148. The next 2 membrane-spanning stretches (helical) occupy residues 159-179 (LVQG…GYFV) and 197-217 (ITVI…VAWF). Glu-222 is a Zn(2+) binding site.

Belongs to the peptidase M48B family. Zn(2+) is required as a cofactor.

Its subcellular location is the cell inner membrane. This Janthinobacterium sp. (strain Marseille) (Minibacterium massiliensis) protein is Protease HtpX homolog.